The primary structure comprises 399 residues: Presilphiperfolan-8-beta-ol synthase (399 aa).

A disordered region spans residues 1–60; that stretch reads MAIPALEPQLHDADTSSNNMSSNSTDSGYDTNSTTPLEKSEKPNTQELKQQQLDPKRPPF. Residues 15–27 show a composition bias toward low complexity; the sequence is TSSNNMSSNSTDS. Polar residues predominate over residues 28 to 37; that stretch reads GYDTNSTTPL. Positions 141, 285, and 289 each coordinate Mg(2+). Positions 141–145 match the DDXXD motif motif; sequence DDQFD. Positions 373 and 374 each coordinate (2E,6E)-farnesyl diphosphate.

Belongs to the terpene synthase family. Requires Mg(2+) as cofactor.

It catalyses the reaction (2E,6E)-farnesyl diphosphate + H2O = presilphiperfolan-8beta-ol + diphosphate. It functions in the pathway secondary metabolite biosynthesis. Functionally, presilphiperfolan-8-beta-ol synthase; part of the gene cluster that mediates the biosynthesis of botrydial. Botrydial is necessary for colonization of plant tissue by the T4 strain. It is a strain-dependent virulence factor since highly aggressive strains like SAS56 or B05 still retain substantial virulence when botrydial synthesis is impaired, since they produce also botcinic acid. The first step of botrydial biosynthesis is performed by the sesquiterpene synthase BOT2 which catalyzes the cyclization of farnesyl diphosphate (FPP) to presilphiperfolan-8-beta-ol (PSP). The cytochrome P450 monooxygenase BOT4 then catalyzes the hydroxylation at C-4 to give a probotryane intermediate. Acetylation of the hydroxyl at C-4 is carried out by the acetyltransferase BOT5, followed by the combined action of the P450 monooxygenases BOT3 and BOT1, to yield finally the glycol, via the regio- and stereospecific hydroxylations at C-10 and C-15 of the probotryane intermediates, respectively. The cleavage of the C10-C15 bond of probotryane skeleton is an intriguing and chemically important reaction, which could be mediated by some of the monooxygenases or by a combination of them. It is possible that either BOT3 or BOT1 would oxidize either the 10- or the 15-hydroxy group to the hydroperoxide derivative, which would then undergo heterolytic fragmentation to give the dialdehyde botrydial. Finally, the dehydrogenase BOT7 might be involved in the conversion of botrydial to dihydrobotrydial. The protein is Presilphiperfolan-8-beta-ol synthase (BOT2) of Botryotinia fuckeliana (Noble rot fungus).